The primary structure comprises 408 residues: 1-deoxy-D-xylulose 5-phosphate reductoisomerase (408 aa).

Positions 26, 27, 28, 29, and 143 each coordinate NADPH. Lys144 provides a ligand contact to 1-deoxy-D-xylulose 5-phosphate. Residue Glu145 coordinates NADPH. Asp167 is a Mn(2+) binding site. Positions 168, 169, 193, and 216 each coordinate 1-deoxy-D-xylulose 5-phosphate. Glu169 is a binding site for Mn(2+). Gly222 is an NADPH binding site. The 1-deoxy-D-xylulose 5-phosphate site is built by Ser229, Asn234, Lys235, and Glu238. A Mn(2+)-binding site is contributed by Glu238.

The protein belongs to the DXR family. Mg(2+) serves as cofactor. The cofactor is Mn(2+).

It catalyses the reaction 2-C-methyl-D-erythritol 4-phosphate + NADP(+) = 1-deoxy-D-xylulose 5-phosphate + NADPH + H(+). The protein operates within isoprenoid biosynthesis; isopentenyl diphosphate biosynthesis via DXP pathway; isopentenyl diphosphate from 1-deoxy-D-xylulose 5-phosphate: step 1/6. Its function is as follows. Catalyzes the NADPH-dependent rearrangement and reduction of 1-deoxy-D-xylulose-5-phosphate (DXP) to 2-C-methyl-D-erythritol 4-phosphate (MEP). In Corynebacterium jeikeium (strain K411), this protein is 1-deoxy-D-xylulose 5-phosphate reductoisomerase.